The following is a 1135-amino-acid chain: Glutamate receptor ionotropic, NMDA 3A (1135 aa).

The first 23 residues, 1–23, serve as a signal peptide directing secretion; sequence MRRLSLWWLLSRVCLLLPPPCAL. At 24 to 674 the chain is on the extracellular side; that stretch reads VLAGVPSSSS…PIGAFMWPLH (651 aa). The tract at residues 60-117 is disordered; that stretch reads TAPRAASRAQEGGRAGAQRDDPESGTWRPPAPSQGARWLGSALHGRGPPGSRKLGEGA. 10 N-linked (GlcNAc...) asparagine glycosylation sites follow: N145, N264, N275, N285, N296, N300, N426, N439, N549, and N565. Intrachain disulfides connect C537/C575 and C543/C576. 3 residues coordinate glycine: S631, S633, and R638. Residues S633 and R638 each coordinate D-serine. The chain crosses the membrane as a helical span at residues 675–694; sequence WTMWLGIFVALHITAIFLTL. The Cytoplasmic segment spans residues 695 to 715; it reads YEWKSPFGMTPKGRNRNKVFS. The segment at residues 716–727 is an intramembrane region (discontinuously helical); sequence FSSALNVCYALL. At 728-741 the chain is on the cytoplasmic side; the sequence is FGRTAAIKPPKCWT. Residues 742–761 form a helical membrane-spanning segment; the sequence is GRFLMNLWAIFCMFCLSTYT. Topologically, residues 762–932 are extracellular; the sequence is ANLAAVMVGE…TLQMGIKHFS (171 aa). S801 contacts glycine. The D-serine site is built by S801, A802, and D845. A glycine-binding site is contributed by D845. C859 and C913 are disulfide-bonded. The N-linked (GlcNAc...) asparagine glycan is linked to N886. A helical membrane pass occupies residues 933-948; it reads GLFVLLCIGFGLSILT. Residues 949–1135 lie on the Cytoplasmic side of the membrane; that stretch reads TIGEHIVHRL…YQKTNRTCES (187 aa). The interval 951-987 is PPP2CB binding site; sequence GEHIVHRLLLPRIKNKSKLQYWLHTSQRFHRALNTSF. Positions 1080-1129 form a coiled coil; sequence TTNGKADSLNVTRSSVIQELSELEKQIQVIRQELQLAVSRKTELEEYQKT. The tract at residues 1082-1115 is GIT1-binding; the sequence is NGKADSLNVTRSSVIQELSELEKQIQVIRQELQL.

This sequence belongs to the glutamate-gated ion channel (TC 1.A.10.1) family. NR3A/GRIN3A subfamily. As to quaternary structure, heterotetramer. Forms heterotetrameric channels composed of two GluN1/zeta subunits (GRIN1), and two identical GluN3 subunits (GRIN3A or GRIN3B) (in vitro). Can also form heterotetrameric channels that contain at least two GluN1 subunits and at least a combination of one GluN2 and one GluN3 subunits (in vitro). Does not form functional homomeric channels. Found in a complex with GRIN1, GRIN2A or GRIN2B and PPP2CB. Probably interacts with PPP2CB. No complex with PPP2CB is detected when NMDARs are stimulated by NMDA. Interacts (via C-terminus) with GIT1, but not with GRIA1/GluA1, nor with synaptophysin/SYP; this interaction competes with GIT1 interaction with ARHGEF7/beta-PIX. Post-translationally, N-glycosylated. In terms of tissue distribution, isoform 1 and isoform 2 are expressed in olfactory bulb, frontal occipital, entorhinal and pyriform cortices, hippocampus, striatum, thalamus, cerebellum and spinal cord.

It localises to the cell membrane. Its subcellular location is the postsynaptic cell membrane. The protein localises to the postsynaptic density. It catalyses the reaction Ca(2+)(in) = Ca(2+)(out). The catalysed reaction is Na(+)(in) = Na(+)(out). With respect to regulation, excitatory glycine receptors are inhibited by D-serine at a concentrion of 10uM. Component of a non-conventional N-methyl-D-aspartate (NMDA) receptors (NMDARs) that function as heterotetrameric, ligand-gated cation channels with low calcium permeability and low voltage-dependent block by Mg(2+). During the development of neural circuits, participates in the synaptic refinement period, restricting spine maturation and growth. Forms glutamatergic receptor complexes with GluN1 and GluN2 subunits which are activated by glycine binding to the GluN1 and GluN3 subunits and L-glutamate binding to GluN2 subunits. Forms excitatory glycinergic receptor complexes with GluN1 alone which are activated by glycine binding to the GluN1 and GluN3 subunits. GluN3A subunit also binds D-serine. Each GluN3 subunit confers differential attributes to channel properties, including activation, deactivation and desensitization kinetics, pH sensitivity, Ca2(+) permeability, and binding to allosteric modulators. By competing with GIT1 interaction with ARHGEF7/beta-PIX, may reduce GIT1/ARHGEF7-regulated local activation of RAC1, hence affecting signaling and limiting the maturation and growth of inactive synapses. This is Glutamate receptor ionotropic, NMDA 3A from Rattus norvegicus (Rat).